The primary structure comprises 601 residues: Sulfite reductase [NADPH] flavoprotein alpha-component (601 aa).

Residues 64–202 (ITLISASQTG…SAQQWRQQIV (139 aa)) enclose the Flavodoxin-like domain. Residues 70–75 (SQTGNA), 117–120 (STQG), and 153–162 (LGDTSYEHFC) each bind FMN. Positions 236-450 (AAPLTAQLSV…IEHNDNFRLP (215 aa)) constitute an FAD-binding FR-type domain. Residues T324, K358, 388 to 391 (RLYS), 406 to 408 (TVG), Y412, and 421 to 424 (GGAS) contribute to the FAD site. Residues 521–522 (SR), 527–531 (KIYVQ), and D563 each bind NADP(+). Residue Y601 coordinates FAD.

This sequence belongs to the NADPH-dependent sulphite reductase flavoprotein subunit CysJ family. In the N-terminal section; belongs to the flavodoxin family. It in the C-terminal section; belongs to the flavoprotein pyridine nucleotide cytochrome reductase family. Alpha(8)-beta(8). The alpha component is a flavoprotein, the beta component is a hemoprotein. FAD is required as a cofactor. The cofactor is FMN.

The enzyme catalyses hydrogen sulfide + 3 NADP(+) + 3 H2O = sulfite + 3 NADPH + 4 H(+). The protein operates within sulfur metabolism; hydrogen sulfide biosynthesis; hydrogen sulfide from sulfite (NADPH route): step 1/1. Functionally, component of the sulfite reductase complex that catalyzes the 6-electron reduction of sulfite to sulfide. This is one of several activities required for the biosynthesis of L-cysteine from sulfate. The flavoprotein component catalyzes the electron flow from NADPH -&gt; FAD -&gt; FMN to the hemoprotein component. This chain is Sulfite reductase [NADPH] flavoprotein alpha-component, found in Yersinia enterocolitica serotype O:8 / biotype 1B (strain NCTC 13174 / 8081).